The following is a 317-amino-acid chain: Tumor-associated calcium signal transducer 2 (317 aa).

Residues 1–24 (MARGLDLAPLLLLLLAMVAGFCTA) form the signal peptide. At 25-270 (QINCTCPTNK…QFSMKRLTTG (246 aa)) the chain is on the extracellular side. N-linked (GlcNAc...) asparagine glycosylation is present at Asn-27. The Thyroglobulin type-1 domain maps to 64 to 139 (TSKCLLLKAR…TDKGDQSLRC (76 aa)). 3 disulfides stabilise this stretch: Cys-67–Cys-102, Cys-113–Cys-119, and Cys-121–Cys-139. The N-linked (GlcNAc...) asparagine glycan is linked to Asn-114. Asn-162 and Asn-202 each carry an N-linked (GlcNAc...) asparagine glycan. Residues 271–291 (LIAVIAVVAVALVAGVVVLVV) form a helical membrane-spanning segment. Residues 292–317 (TNRRKSGKYKKVELKELGEMRSEPSL) are Cytoplasmic-facing.

It belongs to the EPCAM family.

It localises to the membrane. In terms of biological role, may function as a growth factor receptor. The polypeptide is Tumor-associated calcium signal transducer 2 (Tacstd2) (Rattus norvegicus (Rat)).